We begin with the raw amino-acid sequence, 398 residues long: Chorismate synthase (398 aa).

Positions 44 and 50 each coordinate NADP(+). Residues 133–135 (RAS), 261–262 (QA), Gly306, 321–325 (KPIPT), and Arg347 each bind FMN.

It belongs to the chorismate synthase family. Homotetramer. It depends on FMNH2 as a cofactor.

It catalyses the reaction 5-O-(1-carboxyvinyl)-3-phosphoshikimate = chorismate + phosphate. It functions in the pathway metabolic intermediate biosynthesis; chorismate biosynthesis; chorismate from D-erythrose 4-phosphate and phosphoenolpyruvate: step 7/7. Catalyzes the anti-1,4-elimination of the C-3 phosphate and the C-6 proR hydrogen from 5-enolpyruvylshikimate-3-phosphate (EPSP) to yield chorismate, which is the branch point compound that serves as the starting substrate for the three terminal pathways of aromatic amino acid biosynthesis. This reaction introduces a second double bond into the aromatic ring system. This Aquifex aeolicus (strain VF5) protein is Chorismate synthase.